Consider the following 150-residue polypeptide: Large ribosomal subunit protein bL9 (150 aa).

This sequence belongs to the bacterial ribosomal protein bL9 family.

In terms of biological role, binds to the 23S rRNA. This chain is Large ribosomal subunit protein bL9, found in Pectobacterium carotovorum subsp. carotovorum (strain PC1).